A 233-amino-acid polypeptide reads, in one-letter code: Nucleoside diphosphate kinase 2, chloroplastic (233 aa).

Residues 1–67 constitute a chloroplast transit peptide; it reads MEAMSGLSSP…LISHSLPRKK (67 aa). The ATP site is built by K93, F141, R169, T175, R186, and N196. The active-site Pros-phosphohistidine intermediate is H199.

Belongs to the NDK family. Mg(2+) is required as a cofactor.

Its subcellular location is the plastid. It is found in the chloroplast. The catalysed reaction is a 2'-deoxyribonucleoside 5'-diphosphate + ATP = a 2'-deoxyribonucleoside 5'-triphosphate + ADP. The enzyme catalyses a ribonucleoside 5'-diphosphate + ATP = a ribonucleoside 5'-triphosphate + ADP. Its function is as follows. Major role in the synthesis of nucleoside triphosphates other than ATP. The ATP gamma phosphate is transferred to the NDP beta phosphate via a ping-pong mechanism, using a phosphorylated active-site intermediate. This is Nucleoside diphosphate kinase 2, chloroplastic (NDPK2) from Spinacia oleracea (Spinach).